Consider the following 931-residue polypeptide: GPI ethanolamine phosphate transferase 1 (931 aa).

Residue Met1 is a topological domain, cytoplasmic. The helical transmembrane segment at 2–22 (LLFFALGLLIHFVFFASIFDI) threads the bilayer. The Lumenal segment spans residues 23 to 442 (YFTSPLVHGM…SYYHTYDRLF (420 aa)). Residues Asn128, Asn192, Asn295, and Asn350 are each glycosylated (N-linked (GlcNAc...) asparagine). A helical membrane pass occupies residues 443–463 (LGINVAVGFVGWMSYTSLLII). The Cytoplasmic segment spans residues 464–480 (KSHSNIPKGTRKEGKKP). The helical transmembrane segment at 481–501 (HCLLLYSFIATGVLVACFLMI) threads the bilayer. Gln502 is a topological domain (lumenal). Residues 503–523 (ACPWTYYVYCLLPVPIWYAVL) traverse the membrane as a helical segment. Residues 524–543 (REHEVIQDLVESLLTFPRSH) are Cytoplasmic-facing. A helical transmembrane segment spans residues 544–564 (FVAYLLVFTLGIEVLVLSFFY). A topological domain (lumenal) is located at residue Arg565. A helical transmembrane segment spans residues 566-586 (YMLTAGLIVFAGWPFLTQLWT). The Cytoplasmic segment spans residues 587 to 591 (RAKIT). A helical transmembrane segment spans residues 592–612 (FLSWAFFSLLLAVFPLMPVVG). Over 613–618 (RKPNLS) the chain is Lumenal. Asn616 carries an N-linked (GlcNAc...) asparagine glycan. Residues 619–639 (LVMGAGFLVLLLSLAVVTTLG) form a helical membrane-spanning segment. Residues 640–649 (KRNIKLVKGE) lie on the Cytoplasmic side of the membrane. The chain crosses the membrane as a helical span at residues 650–670 (LLVLLLQMLSTVLSMYVVYST). The Lumenal portion of the chain corresponds to 671 to 685 (HHSLLKKEGLPLMNQ). A helical membrane pass occupies residues 686–706 (IVSWATLASSLVAPLLSSTAL). The Cytoplasmic segment spans residues 707–723 (SQRLASILLSLMSTYLL). A helical membrane pass occupies residues 724 to 744 (LSTGYEALFPLVLSCLMFVWI). The Lumenal portion of the chain corresponds to 745–786 (QVEQETLQQPGVSCKQKLTSIQFTCDTDIAQFRQLCPDDIRR). Residues 787–807 (AFFLVFFLLTAFFGTGNIASI) form a helical membrane-spanning segment. Residues 808-824 (NSFDLASVYCFLTVFSP) lie on the Cytoplasmic side of the membrane. Residues 825-845 (FMMGALMMWKILIPFVLVMCA) traverse the membrane as a helical segment. Residues 846 to 858 (FEAVQITTQLSSK) lie on the Lumenal side of the membrane. Residues 859–879 (GLFLVVLIISDIMALHFFFLV) form a helical membrane-spanning segment. At 880–894 (KDSGSWLDIGTSISH) the chain is on the cytoplasmic side. Residues 895–915 (YVIVMSMTIFLVFLNGLAQLL) traverse the membrane as a helical segment. At 916 to 931 (TTKKLQLCGKPKSHLM) the chain is on the lumenal side.

This sequence belongs to the PIGG/PIGN/PIGO family. PIGN subfamily.

The protein localises to the endoplasmic reticulum membrane. Its pathway is glycolipid biosynthesis; glycosylphosphatidylinositol-anchor biosynthesis. In terms of biological role, ethanolamine phosphate transferase that catalyzes an ethanolamine phosphate (EtNP) transfer from phosphatidylethanolamine (PE) to the 2-OH position of the first alpha-1,4-linked mannose of the alpha-D-Man-(1-&gt;6)-alpha-D-Man-(1-&gt;4)-alpha-D-GlcN-(1-&gt;6)-(1-radyl,2-acyl-sn-glycero-3-phospho)-2-acyl-inositol (also termed H3) intermediate to generate an alpha-D-Man-(1-&gt;6)-2-PEtn-alpha-D-Man-(1-&gt;4)-alpha-D-GlcN-(1-&gt;6)-(1-radyl,2-acyl-sn-glycero-3-phospho)-2-acyl-inositol and participates in the eighth step of the glycosylphosphatidylinositol-anchor biosynthesis. May act as suppressor of replication stress and chromosome missegregation. The polypeptide is GPI ethanolamine phosphate transferase 1 (Mus musculus (Mouse)).